Consider the following 203-residue polypeptide: Tic20 family protein Ycf60 (203 aa).

The next 5 membrane-spanning stretches (helical) occupy residues 2–22, 51–71, 84–104, 131–151, and 153–173; these read IRLF…RLAI, IIPY…YVLP, ILLP…VTFF, ILLF…PIEF, and ISFI…STIT.

Belongs to the Tic20 family.

The protein localises to the plastid. Its subcellular location is the chloroplast membrane. The polypeptide is Tic20 family protein Ycf60 (ycf60) (Porphyra purpurea (Red seaweed)).